Consider the following 486-residue polypeptide: Nucleolar GTP-binding protein 2 (486 aa).

The disordered stretch occupies residues 1 to 20; sequence MGTGKKEKSRRIREGDTKDG. Ser60, Ser85, and Ser155 each carry phosphoserine. The CP-type G domain maps to 212 to 373; the sequence is WNELYKVIDS…LIDCPGIVPP (162 aa). Residues 322–329 and 366–370 each bind GTP; these read GYPNTGKS and DCPGI.

The protein belongs to the TRAFAC class YlqF/YawG GTPase family. NOG2 subfamily.

It is found in the nucleus. It localises to the nucleolus. Functionally, GTPase that associates with pre-60S ribosomal subunits in the nucleolus and is required for their nuclear export and maturation. This Saccharomyces cerevisiae (strain ATCC 204508 / S288c) (Baker's yeast) protein is Nucleolar GTP-binding protein 2 (NOG2).